A 438-amino-acid chain; its full sequence is Enolase (438 aa).

(2R)-2-phosphoglycerate is bound at residue Gln-164. Glu-206 functions as the Proton donor in the catalytic mechanism. 3 residues coordinate Mg(2+): Asp-243, Glu-289, and Asp-316. Residues Lys-341, Arg-370, Ser-371, and Lys-392 each contribute to the (2R)-2-phosphoglycerate site. Lys-341 (proton acceptor) is an active-site residue.

The protein belongs to the enolase family. Mg(2+) serves as cofactor.

The protein localises to the cytoplasm. The protein resides in the secreted. It is found in the cell surface. It carries out the reaction (2R)-2-phosphoglycerate = phosphoenolpyruvate + H2O. Its pathway is carbohydrate degradation; glycolysis; pyruvate from D-glyceraldehyde 3-phosphate: step 4/5. In terms of biological role, catalyzes the reversible conversion of 2-phosphoglycerate (2-PG) into phosphoenolpyruvate (PEP). It is essential for the degradation of carbohydrates via glycolysis. The protein is Enolase of Borrelia garinii subsp. bavariensis (strain ATCC BAA-2496 / DSM 23469 / PBi) (Borreliella bavariensis).